A 335-amino-acid polypeptide reads, in one-letter code: Methionine import ATP-binding protein MetN (335 aa).

One can recognise an ABC transporter domain in the interval 2–241; sequence IQFKDSYKHY…PQHPTTRSFV (240 aa). 38–45 contributes to the ATP binding site; that stretch reads GHSGAGKS.

Belongs to the ABC transporter superfamily. Methionine importer (TC 3.A.1.24) family. In terms of assembly, the complex is composed of two ATP-binding proteins (MetN), two transmembrane proteins (MetI) and a solute-binding protein (MetQ).

It is found in the cell inner membrane. The catalysed reaction is L-methionine(out) + ATP + H2O = L-methionine(in) + ADP + phosphate + H(+). The enzyme catalyses D-methionine(out) + ATP + H2O = D-methionine(in) + ADP + phosphate + H(+). Functionally, part of the ABC transporter complex MetNIQ involved in methionine import. Responsible for energy coupling to the transport system. The sequence is that of Methionine import ATP-binding protein MetN from Xylella fastidiosa (strain Temecula1 / ATCC 700964).